The primary structure comprises 445 residues: Probable spore coat protein sigD (445 aa).

An N-terminal signal peptide occupies residues 1 to 20; it reads MKKVITLLALMAAAQIYAQG. Residues 21-139 enclose the DSCP-N domain; the sequence is QECINLSENE…GHGVCEDFNR (119 aa). Residues 141 to 159 show a composition bias toward polar residues; that stretch reads ESGSGNKEQISTTGNTGPQ. The interval 141-161 is disordered; it reads ESGSGNKEQISTTGNTGPQTR. Follistatin-like domains lie at 178 to 201, 213 to 237, 272 to 295, 324 to 348, 368 to 391, and 416 to 439; these read ACTN…AHCY, GCLN…AHCV, ICSN…AQCV, VCSN…ADCL, VCSN…AQCA, and VCQN…GECV.

May contribute to the structure of the coat at the interface between the middle, cellulosic layer and the outer, electron-dense, proteinaceous layer. The polypeptide is Probable spore coat protein sigD (sigD) (Dictyostelium discoideum (Social amoeba)).